We begin with the raw amino-acid sequence, 265 residues long: Bidirectional sugar transporter SWEET7b (265 aa).

Over 1 to 9 (MVSPDLIRN) the chain is Extracellular. Residues 10–30 (MVGIVGNIISFGLFLSPVPTF) traverse the membrane as a helical segment. The MtN3/slv 1 domain maps to 10-97 (MVGIVGNIIS…TIFFLFSDKK (88 aa)). Residues 31 to 45 (YRIIKNKDVQDFKAD) are Cytoplasmic-facing. The helical transmembrane segment at 46-66 (PYLATLLNCMLWVFYGLPIVH) threads the bilayer. The Extracellular segment spans residues 67–69 (PNS). Residues 70–90 (ILVVTINGIGLVIEAVYLTIF) form a helical membrane-spanning segment. Residues 91–101 (FLFSDKKNKKK) lie on the Cytoplasmic side of the membrane. The helical transmembrane segment at 102 to 122 (MGVVLATEALFMAAVVLGVLL) threads the bilayer. The Extracellular segment spans residues 123-131 (GAHTHQRRS). A helical transmembrane segment spans residues 132–152 (LIVGILCVIFGTIMYSSPLTI). Residues 133-215 (IVGILCVIFG…QLILYAIYYR (83 aa)) enclose the MtN3/slv 2 domain. At 153-165 (MSQVVKTKSVEYM) the chain is on the cytoplasmic side. Residues 166-186 (PLLLSVVSFLNGLCWTSYALI) form a helical membrane-spanning segment. Residues 187–189 (RLD) lie on the Extracellular side of the membrane. A helical membrane pass occupies residues 190–210 (IFITIPNGLGVLFALMQLILY). Residues 211–265 (AIYYRTIPKKQDKNLELPTVAPVAKDTSIVTPVSKDDDVDGGNASHVTINITIEL) are Cytoplasmic-facing.

The protein belongs to the SWEET sugar transporter family. As to quaternary structure, forms homooligomers and/or heterooligomers.

The protein resides in the cell membrane. Mediates both low-affinity uptake and efflux of sugar across the plasma membrane. This Oryza sativa subsp. japonica (Rice) protein is Bidirectional sugar transporter SWEET7b (SWEET7B).